The following is a 109-amino-acid chain: UPF0449 protein C19orf25 homolog (109 aa).

Tyr63 bears the Phosphotyrosine mark.

The protein belongs to the UPF0449 family.

This is UPF0449 protein C19orf25 homolog from Rattus norvegicus (Rat).